The chain runs to 220 residues: Uracil-DNA glycosylase 2 (220 aa).

Aspartate 65 acts as the Proton acceptor in catalysis.

This sequence belongs to the uracil-DNA glycosylase (UDG) superfamily. UNG family.

It localises to the cytoplasm. The enzyme catalyses Hydrolyzes single-stranded DNA or mismatched double-stranded DNA and polynucleotides, releasing free uracil.. Excises uracil residues from the DNA which can arise as a result of misincorporation of dUMP residues by DNA polymerase or due to deamination of cytosine. In Bacteroides fragilis (strain ATCC 25285 / DSM 2151 / CCUG 4856 / JCM 11019 / LMG 10263 / NCTC 9343 / Onslow / VPI 2553 / EN-2), this protein is Uracil-DNA glycosylase 2.